Reading from the N-terminus, the 458-residue chain is KAT8 regulatory NSL complex subunit 2 (458 aa).

Lysine 78 participates in a covalent cross-link: Glycyl lysine isopeptide (Lys-Gly) (interchain with G-Cter in SUMO2). The disordered stretch occupies residues 126 to 182 (ELGSQTPESSRSEASRILDEDSWSDGDQEPITVDQTWRGDPDSEADSIDSDQEDPLK). The residue at position 131 (threonine 131) is a Phosphothreonine. Over residues 135–144 (SRSEASRILD) the composition is skewed to basic and acidic residues. Phosphoserine is present on residues serine 147, serine 149, serine 168, serine 172, and serine 175. The segment covering 167-178 (DSEADSIDSDQE) has biased composition (acidic residues). The segment at 308–364 (DVRCSNQSLPMTRHCLTHICQDTNQVLFKCCQGSEEVPCNKPVPVSLSEDPCCPLHF) is required for interaction with other NSL complex members. Residues 419 to 458 (QMAGDGCRSQGPRNSEKAPAPLPQSGIATANGKPEPTSVS) are disordered.

In terms of assembly, component of the NSL complex at least composed of KAT8/MOF, KANSL1, KANSL2, KANSL3, MCRS1, PHF20, OGT1/OGT, WDR5 and HCFC1.

It localises to the nucleus. The protein localises to the mitochondrion. Non-catalytic component of the NSL histone acetyltransferase complex, a multiprotein complex that mediates histone H4 acetylation at 'Lys-5'- and 'Lys-8' (H4K5ac and H4K8ac) at transcription start sites and promotes transcription initiation. Required for NSL complex stability and for transcription of intraciliary transport genes in both ciliated and non-ciliated cells by regulating histone H4 acetylation at 'Lys-5'- and 'Lys-12' (H4K5ac and H4K12ac). This is necessary for cilium assembly in ciliated cells and for organization of the microtubule cytoskeleton in non-ciliated cells. Required within the NSL complex to maintain nuclear architecture stability by promoting KAT8-mediated acetylation of lamin LMNA. The protein is KAT8 regulatory NSL complex subunit 2 (KANSL2) of Bos taurus (Bovine).